The following is a 311-amino-acid chain: Methionyl-tRNA formyltransferase (311 aa).

110–113 (SLLP) contributes to the (6S)-5,6,7,8-tetrahydrofolate binding site.

The protein belongs to the Fmt family.

The enzyme catalyses L-methionyl-tRNA(fMet) + (6R)-10-formyltetrahydrofolate = N-formyl-L-methionyl-tRNA(fMet) + (6S)-5,6,7,8-tetrahydrofolate + H(+). In terms of biological role, attaches a formyl group to the free amino group of methionyl-tRNA(fMet). The formyl group appears to play a dual role in the initiator identity of N-formylmethionyl-tRNA by promoting its recognition by IF2 and preventing the misappropriation of this tRNA by the elongation apparatus. The polypeptide is Methionyl-tRNA formyltransferase (Streptococcus pyogenes serotype M28 (strain MGAS6180)).